The primary structure comprises 320 residues: Cytochrome f (320 aa).

A signal peptide spans 1–35; that stretch reads MQNRNTFSWVKEQMTRSISVSIIIYVITRTSISNA. The heme site is built by Tyr36, Cys56, Cys59, and His60. The helical transmembrane segment at 286–306 threads the bilayer; the sequence is VQGLLFFLASIILAQIFLVLK.

The protein belongs to the cytochrome f family. In terms of assembly, the 4 large subunits of the cytochrome b6-f complex are cytochrome b6, subunit IV (17 kDa polypeptide, petD), cytochrome f and the Rieske protein, while the 4 small subunits are PetG, PetL, PetM and PetN. The complex functions as a dimer. Heme is required as a cofactor.

The protein localises to the plastid. It localises to the chloroplast thylakoid membrane. In terms of biological role, component of the cytochrome b6-f complex, which mediates electron transfer between photosystem II (PSII) and photosystem I (PSI), cyclic electron flow around PSI, and state transitions. This Chloranthus spicatus (Chulantree) protein is Cytochrome f.